We begin with the raw amino-acid sequence, 211 residues long: Cytochrome c biogenesis ATP-binding export protein CcmA (211 aa).

The 193-residue stretch at Leu-17 to Trp-209 folds into the ABC transporter domain. Gly-49 to Ser-56 is a binding site for ATP.

This sequence belongs to the ABC transporter superfamily. CcmA exporter (TC 3.A.1.107) family. The complex is composed of two ATP-binding proteins (CcmA) and two transmembrane proteins (CcmB).

It is found in the cell inner membrane. It carries out the reaction heme b(in) + ATP + H2O = heme b(out) + ADP + phosphate + H(+). In terms of biological role, part of the ABC transporter complex CcmAB involved in the biogenesis of c-type cytochromes; once thought to export heme, this seems not to be the case, but its exact role is uncertain. Responsible for energy coupling to the transport system. This Gluconobacter oxydans (strain 621H) (Gluconobacter suboxydans) protein is Cytochrome c biogenesis ATP-binding export protein CcmA.